The sequence spans 105 residues: U2-lycotoxin-Ls1b (105 aa).

The signal sequence occupies residues 1-17 (MIKYVLISALLVVAVYS). Residues 18-41 (FTIEDNEDALLEEAEDELDTEEER) constitute a propeptide that is removed on maturation. 4 disulfide bridges follow: Cys-51-Cys-67, Cys-58-Cys-97, Cys-60-Cys-83, and Cys-69-Cys-81.

It belongs to the neurotoxin 04 (omega-agtx) family. 01 (type I omega-agtx) subfamily. Expressed by the venom gland.

It is found in the secreted. Its function is as follows. Insecticidal to house crickets. It induces an excitatory slow-onset impact that leads to irreversible spastic paralysis. It also modifies human voltage-gated potassium channel Kv1.5/KCNA5. Most likely, it binds to the voltage-sensing domain of the channel, suggesting it does not block the pore but prevents its opening at physiological membrane potentials. The recombinant peptide binds to the channel in an irreversible manner and slows down the hKv1.5 current activation kinetics. It is not toxic to mice, when intracranially injected (at 0.5 ug/g mouse). This chain is U2-lycotoxin-Ls1b, found in Lycosa singoriensis (Wolf spider).